Consider the following 57-residue polypeptide: MIQSPTSFLIVLILLWCKLVLSCFREFIIALQQLIQVLLQIINSNLQPRLTLCHSLD.

The first 22 residues, 1–22 (MIQSPTSFLIVLILLWCKLVLS), serve as a signal peptide directing secretion.

In terms of biological role, involved in resistance to IFN. The sequence is that of Non-structural protein 3a from Gallus gallus (Chicken).